A 520-amino-acid chain; its full sequence is MPQSLPFSPAWLAFEEAVRGASHRGDHLRIIEGGGLSVDLTAQAYSPQLEAAGLALCEQQGFALARRQLFEGGEANWTEHRPAWHTALRAALPPPSVAKDILNERERLRRFVDEADARGAYKYVLHLGIGGSDWGPRLVARALRHQGLKREVRFASNVDSHAVADAMHQLDPHETLVIVASKSFTTTEPLANAEVAIHWLQNAGVADPIKQVVAITANVDAALDFGISPQHVFRFWDWVGGRYSLWSAIGLPIALAMGNNTFDELLAGAAAMDEHFLRAPLAANAPVQMALAGLANRSVMGFNSLAIAPYDSRLAHLVPWAQQLEMESLGKVATRDGSPAGVPTGPVVWGMTGTDCQHTFFQWLHQDTTGAPVDFIVCEHADHTYDHHHRLLIANCLAQRAALLRGKSFEDALAETCARVDDPSEARILAEHLVHPGRRPSTLIVLPRMTAHNLGALLALYEHKVFTQGVLWGINPFDQWGVEFGKALARGIIGELDKPSGMASADPSTRYWVDLLSRRS.

Glutamate 327 acts as the Proton donor in catalysis. Residues histidine 358 and lysine 486 contribute to the active site.

Belongs to the GPI family.

It is found in the cytoplasm. The catalysed reaction is alpha-D-glucose 6-phosphate = beta-D-fructose 6-phosphate. Its pathway is carbohydrate biosynthesis; gluconeogenesis. The protein operates within carbohydrate degradation; glycolysis; D-glyceraldehyde 3-phosphate and glycerone phosphate from D-glucose: step 2/4. Its function is as follows. Catalyzes the reversible isomerization of glucose-6-phosphate to fructose-6-phosphate. In Bordetella avium (strain 197N), this protein is Glucose-6-phosphate isomerase.